A 574-amino-acid chain; its full sequence is Optineurin (574 aa).

Residues 1-33 (MSHQPLSCLTEKGDSPTETTGNGPPTLAHPNLD) form a disordered region. The stretch at 38 to 170 (HELLQQMREL…VSELQLKLNS (133 aa)) forms a coiled coil. The interval 58-209 (MKLNNQAMKG…GPIRTDSIDT (152 aa)) is interaction with Rab8. The LIR motif lies at 176 to 181 (DSFVEI). Serine 177 is modified (phosphoserine; by TBK1). Serine 198 bears the Phosphoserine mark. Positions 233 to 496 (CLREGNQKVE…ALQLAVLLKD (264 aa)) form a coiled coil. The span at 262–286 (AKDRSETETQTEEHKEQEKEEEKSP) shows a compositional bias: basic and acidic residues. Residues 262–292 (AKDRSETETQTEEHKEQEKEEEKSPETVGSE) are disordered. Serine 336 is modified (phosphoserine). An interaction with HD region spans residues 405 to 574 (KRRESEKVDK…LLIHVTDCII (170 aa)). Positions 406–515 (RRESEKVDKV…RQSLMEMQSR (110 aa)) are interaction with MYO6. Positions 468–473 (DFHAER) match the UBAN motif. Serine 521 carries the post-translational modification Phosphoserine. The segment at 544–574 (QQNIPIHSCPKCGEVLPDIDTLLIHVTDCII) adopts a CCHC NOA-type zinc-finger fold. Residues cysteine 552, cysteine 555, histidine 568, and cysteine 572 each coordinate Zn(2+).

In terms of assembly, self-associates. Interacts with HD. Interacts with GTF3A. Interacts with MYO6. Interacts (via UBAN) with ubiquitinated TFRC. Interacts with GTP-bound Rab8 (RAB8A and/or RAB8B). Interacts with TBC1D17. Interacts with TBK1. Interacts with TRAF3. Binds to linear ubiquitin chains. Interacts with LC3 family members MAP1LC3A, MAP1LC3B, GABARAP, GABARAPL1 and GABARAPL2; OPTN phosphorylation increases the association (at least with MAP1LC3B). Interacts with RAB12; the interaction may be indirect. Interacts with TBK1; this interaction leads to the Golgi localization of TBK1 and its subsequent activation. Interacts with palmitoyltransferase ZDHHC17/HIP14; the interaction does not lead to palmitoylation of OPTN. Interacts with CYLD. Interacts with TOM1; the interaction is indirect and is mediated by MYO6, which acts as a bridge between TOM1 and OPTN. Interacts with USP12; the interaction is independent of USP12 deubiquitinase activity and may be involved in regulation of autophagic flux. In terms of processing, phosphorylated by TBK1, leading to restrict bacterial proliferation in case of infection. As to expression, present in aqueous humor of the eye (at protein level). Expressed in trabecular meshwork and astrocytes.

It localises to the cytoplasm. It is found in the perinuclear region. The protein localises to the golgi apparatus. Its subcellular location is the trans-Golgi network. The protein resides in the cytoplasmic vesicle. It localises to the autophagosome. It is found in the recycling endosome. Functionally, plays an important role in the maintenance of the Golgi complex, in membrane trafficking, in exocytosis, through its interaction with myosin VI and Rab8. Links myosin VI to the Golgi complex and plays an important role in Golgi ribbon formation. Negatively regulates the induction of IFNB in response to RNA virus infection. Plays a neuroprotective role in the eye and optic nerve. Probably part of the TNF-alpha signaling pathway that can shift the equilibrium toward induction of cell death. May act by regulating membrane trafficking and cellular morphogenesis via a complex that contains Rab8 and huntingtin (HD). Mediates the interaction of Rab8 with the probable GTPase-activating protein TBC1D17 during Rab8-mediated endocytic trafficking, such as that of transferrin receptor (TFRC/TfR); regulates Rab8 recruitment to tubules emanating from the endocytic recycling compartment. Autophagy receptor that interacts directly with both the cargo to become degraded and an autophagy modifier of the MAP1 LC3 family; targets ubiquitin-coated bacteria (xenophagy) and appears to function in the same pathway as SQSTM1 and CALCOCO2/NDP52. This Sus scrofa (Pig) protein is Optineurin (OPTN).